We begin with the raw amino-acid sequence, 644 residues long: Macrolide export ATP-binding/permease protein MacB (644 aa).

In terms of domain architecture, ABC transporter spans 4-242 (IECKNINRYF…SNVGRIQEKA (239 aa)). Residue 40 to 47 (GQSGSGKS) participates in ATP binding. Transmembrane regions (helical) follow at residues 270–290 (LLTM…VALG), 524–544 (IALI…LVSV), 574–594 (LICI…SLVF), and 607–627 (AASV…FGFM).

The protein belongs to the ABC transporter superfamily. Macrolide exporter (TC 3.A.1.122) family. Homodimer.

The protein resides in the cell inner membrane. Non-canonical ABC transporter that contains transmembrane domains (TMD), which form a pore in the inner membrane, and an ATP-binding domain (NBD), which is responsible for energy generation. Overexpression confers resistance against macrolides. This Neisseria gonorrhoeae protein is Macrolide export ATP-binding/permease protein MacB.